A 201-amino-acid polypeptide reads, in one-letter code: Recombination protein RecR (201 aa).

The C4-type zinc finger occupies 60–75 (CKSCGNIDTRNPCTVC). The region spanning 83-178 (SIIVVVADVA…KVTRLAHGVP (96 aa)) is the Toprim domain.

It belongs to the RecR family.

May play a role in DNA repair. It seems to be involved in an RecBC-independent recombinational process of DNA repair. It may act with RecF and RecO. The protein is Recombination protein RecR of Rhodopseudomonas palustris (strain BisB5).